The following is a 579-amino-acid chain: CTP synthase 1 (579 aa).

In terms of domain architecture, Glutamine amidotransferase type-1 spans 305–559 (KIALVGKYTN…LGLVAASAGI (255 aa)). Cys404 functions as the For GATase activity in the catalytic mechanism. A Glycyl lysine isopeptide (Lys-Gly) (interchain with G-Cter in ubiquitin) cross-link involves residue Lys422. Residues His535 and Glu537 each act as for GATase activity in the active site.

The protein belongs to the CTP synthase family. Homodimer. Oligomerizes to a tetramer in the presence of its substrates UTP and ATP.

It catalyses the reaction UTP + L-glutamine + ATP + H2O = CTP + L-glutamate + ADP + phosphate + 2 H(+). It participates in pyrimidine metabolism; CTP biosynthesis via de novo pathway; CTP from UDP: step 2/2. With respect to regulation, activated by GTP and inhibited by CTP. Its function is as follows. Catalyzes the ATP-dependent amination of UTP to CTP with either L-glutamine or ammonia as the source of nitrogen. The sequence is that of CTP synthase 1 (URA7) from Saccharomyces cerevisiae (strain ATCC 204508 / S288c) (Baker's yeast).